A 336-amino-acid chain; its full sequence is Ferrochelatase (336 aa).

Positions 206 and 287 each coordinate Fe cation.

It belongs to the ferrochelatase family.

It is found in the cytoplasm. The enzyme catalyses heme b + 2 H(+) = protoporphyrin IX + Fe(2+). Its pathway is porphyrin-containing compound metabolism; protoheme biosynthesis; protoheme from protoporphyrin-IX: step 1/1. Catalyzes the ferrous insertion into protoporphyrin IX. This chain is Ferrochelatase, found in Neisseria meningitidis serogroup B (strain ATCC BAA-335 / MC58).